A 159-amino-acid polypeptide reads, in one-letter code: Probable deoxyuridine 5'-triphosphate nucleotidohydrolase (159 aa).

It belongs to the dCTP deaminase family. Archaeal dUTPase subfamily.

It carries out the reaction dUTP + H2O = dUMP + diphosphate + H(+). The protein operates within pyrimidine metabolism; dUMP biosynthesis; dUMP from dCTP (dUTP route): step 2/2. Functionally, this enzyme is involved in nucleotide metabolism: it produces dUMP, the immediate precursor of thymidine nucleotides and it decreases the intracellular concentration of dUTP so that uracil cannot be incorporated into DNA. The polypeptide is Probable deoxyuridine 5'-triphosphate nucleotidohydrolase (Aeropyrum pernix (strain ATCC 700893 / DSM 11879 / JCM 9820 / NBRC 100138 / K1)).